We begin with the raw amino-acid sequence, 862 residues long: Ecdysone-induced protein 78C (862 aa).

4 disordered regions span residues 28–83 (SSEQ…EEAL), 97–138 (LHFF…KQHH), 173–210 (ASLS…LNCT), and 230–353 (ASNH…NNNN). The span at 37-46 (KQEDLIKDFT) shows a compositional bias: basic and acidic residues. A compositionally biased stretch (acidic residues) spans 47-82 (RDEEEQPSEEEAEEEDNEEDEEEEGEEEEEDEDEEA). Over residues 105-119 (DSSTQGAYSEANSLE) the composition is skewed to polar residues. Composition is skewed to low complexity over residues 173–206 (ASLS…QQHQ), 230–291 (ASNH…NNSV), 308–335 (QQQQ…QQQQ), and 342–353 (SSSSNGSSNNNN). Positions 360–435 (FVPCKVCGDK…AGMSRDSVRY (76 aa)) form a DNA-binding region, nuclear receptor. 2 consecutive NR C4-type zinc fingers follow at residues 363–383 (CKVC…CEGC) and 399–418 (CLRD…CQYC). The interval 444 to 557 (ELNGAAASSA…NNNSSSGNAS (114 aa)) is disordered. The segment covering 447 to 460 (GAAASSAAAGAPAS) has biased composition (low complexity). Polar residues predominate over residues 463 to 472 (VDDSTSSTLH). Low complexity predominate over residues 475-508 (HLQQQQQQHLLQQQQQQQHQPQLQQHHQLQQQPH). Residues 516–533 (TPSTPQTPQMCSIASSPS) are compositionally biased toward polar residues. A compositionally biased stretch (low complexity) spans 539–555 (NSANNNNNNNNNSSSGN). Residues 626–855 (YTEELTRELM…PPLFAEIFDI (230 aa)) enclose the NR LBD domain.

This sequence belongs to the nuclear hormone receptor family. NR1 subfamily.

Its subcellular location is the nucleus. In terms of biological role, induces the early late puff 78C which triggers puparium formation and development. This Drosophila melanogaster (Fruit fly) protein is Ecdysone-induced protein 78C (Eip78C).